The primary structure comprises 80 residues: UPF0248 protein MJ1316 (80 aa).

This sequence belongs to the UPF0248 family.

This Methanocaldococcus jannaschii (strain ATCC 43067 / DSM 2661 / JAL-1 / JCM 10045 / NBRC 100440) (Methanococcus jannaschii) protein is UPF0248 protein MJ1316.